A 291-amino-acid polypeptide reads, in one-letter code: ATP phosphoribosyltransferase (291 aa).

This sequence belongs to the ATP phosphoribosyltransferase family. Long subfamily. Requires Mg(2+) as cofactor.

The protein resides in the cytoplasm. The enzyme catalyses 1-(5-phospho-beta-D-ribosyl)-ATP + diphosphate = 5-phospho-alpha-D-ribose 1-diphosphate + ATP. It functions in the pathway amino-acid biosynthesis; L-histidine biosynthesis; L-histidine from 5-phospho-alpha-D-ribose 1-diphosphate: step 1/9. With respect to regulation, feedback inhibited by histidine. Functionally, catalyzes the condensation of ATP and 5-phosphoribose 1-diphosphate to form N'-(5'-phosphoribosyl)-ATP (PR-ATP). Has a crucial role in the pathway because the rate of histidine biosynthesis seems to be controlled primarily by regulation of HisG enzymatic activity. This Trichlorobacter lovleyi (strain ATCC BAA-1151 / DSM 17278 / SZ) (Geobacter lovleyi) protein is ATP phosphoribosyltransferase.